Consider the following 117-residue polypeptide: Large ribosomal subunit protein bL17 (117 aa).

The protein belongs to the bacterial ribosomal protein bL17 family. As to quaternary structure, part of the 50S ribosomal subunit. Contacts protein L32.

The polypeptide is Large ribosomal subunit protein bL17 (Dehalococcoides mccartyi (strain ATCC BAA-2100 / JCM 16839 / KCTC 5957 / BAV1)).